A 209-amino-acid chain; its full sequence is Small ribosomal subunit protein uS5 (209 aa).

A compositionally biased stretch (polar residues) spans 1 to 11 (MTQPNTQTTPN). A disordered region spans residues 1–55 (MTQPNTQTTPNDVPAAAEGQQEQQQQQRRGGGRERRGGGRRGDRRGQERDSEWQE). Residues 18–28 (EGQQEQQQQQR) are compositionally biased toward low complexity. Residues 31-55 (GGRERRGGGRRGDRRGQERDSEWQE) show a composition bias toward basic and acidic residues. The S5 DRBM domain maps to 53–116 (WQERVVQIRR…ADGKKHLVKV (64 aa)).

It belongs to the universal ribosomal protein uS5 family. As to quaternary structure, part of the 30S ribosomal subunit. Contacts proteins S4 and S8.

Functionally, with S4 and S12 plays an important role in translational accuracy. In terms of biological role, located at the back of the 30S subunit body where it stabilizes the conformation of the head with respect to the body. This is Small ribosomal subunit protein uS5 from Prochlorococcus marinus (strain MIT 9313).